Here is a 167-residue protein sequence, read N- to C-terminus: MTEMAKGSVTHQRLIALLSQEGADFRVVTHEAVGKCEAVSEIRGTALGQGAKALVCKVKGNGVNQHVLAILAADQQADLSQLASHIGGLRASLASPAEVDELTGCVFGAIPPFSFHPKLKLVADPLLFERFDEIAFNAGMLDKSVILKTADYLRIAQPELVNFRRTA.

Its subcellular location is the cytoplasm. The catalysed reaction is L-seryl-tRNA(Lys) + H2O = tRNA(Lys) + L-serine. The enzyme catalyses L-threonyl-tRNA(Lys) + H2O = tRNA(Lys) + L-threonine. It carries out the reaction L-homoseryl-tRNA(Lys) + H2O = tRNA(Lys) + L-homoserine + H(+). It catalyses the reaction L-seryl-tRNA(Ala) + H2O = tRNA(Ala) + L-serine. The catalysed reaction is L-homoseryl-tRNA(Ser) + H2O = tRNA(Ser) + L-homoserine + H(+). The enzyme catalyses L-seryl-tRNA(Thr) + H2O = tRNA(Thr) + L-serine. It carries out the reaction L-threonyl-tRNA(Ile) + H2O = tRNA(Ile) + L-threonine. It catalyses the reaction L-threonyl-tRNA(Val) + H2O = tRNA(Val) + L-threonine. The catalysed reaction is L-threonyl-tRNA(Ser) + H2O = tRNA(Ser) + L-threonine. In terms of biological role, an aminoacyl-tRNA editing enzyme that deacylates Ser-tRNA and/or Thr-tRNA mischarged by lysyl-tRNA synthetase (LysRS), threonyl-tRNA synthetase (ThrRS), seryl-tRNA synthetase (SerRS), alanyl-tRNA synthetase (AlaRS), valyl-tRNA synthetase (ValRS) and isoleucyl-tRNA synthetase (IleRS) in vitro. Also deacylates mischarged Hse-tRNA(Lys) and Hse-tRNA(Ser), and cognate Ser-tRNA(Ser) and Thr-tRNA(Thr) in vitro. The presence of cognate ThrRS abolishes the Thr-tRNA(Thr) deacylase activity, hence this activity is not applicable physiologically. Not able to remove the amino acid moiety from cognate Val-tRNA(Val), Ile-tRNA(Ile), Lys-tRNA(Lys), Ala-tRNA(Ala) or Pro-tRNA(Pro), or from incorrectly charged Ala-tRNA(Pro), Cys-tRNA(Pro) or Leu-tRNA(Pro) in vitro. May be required in vivo to prevent mistranslation and to maintain growth when the error prone stress-inducible lysyl-tRNA synthetase (LysU) is expressed under environmental pressure. The protein is Multifunctional Ser/Thr-tRNA deacylase ProXp-y of Escherichia coli O157:H7.